We begin with the raw amino-acid sequence, 457 residues long: Cysteine--tRNA ligase (457 aa).

Position 30 (cysteine 30) interacts with Zn(2+). The 'HIGH' region motif lies at 32–42 (PTVYAPAHIGN). Residues cysteine 221, histidine 246, and glutamate 250 each coordinate Zn(2+). Positions 278–282 (KMSKS) match the 'KMSKS' region motif. Lysine 281 provides a ligand contact to ATP.

It belongs to the class-I aminoacyl-tRNA synthetase family. As to quaternary structure, monomer. Requires Zn(2+) as cofactor.

Its subcellular location is the cytoplasm. The catalysed reaction is tRNA(Cys) + L-cysteine + ATP = L-cysteinyl-tRNA(Cys) + AMP + diphosphate. The sequence is that of Cysteine--tRNA ligase from Opitutus terrae (strain DSM 11246 / JCM 15787 / PB90-1).